The chain runs to 2159 residues: Autophagy-related protein 2 (2159 aa).

Disordered stretches follow at residues 98-126 (KGAN…PALP), 292-403 (LSPA…DIDS), 428-475 (DHEG…LGFN), 490-552 (TMLP…NEEA), 585-612 (GGWA…AGRE), 624-682 (VPLD…TASA), 726-766 (FDGH…RTPV), and 980-1001 (TVTS…TPIG). 2 stretches are compositionally biased toward basic and acidic residues: residues 300–315 (DISE…RSSE) and 380–401 (GRFD…HEDI). 3 stretches are compositionally biased toward polar residues: residues 449-475 (PSEN…LGFN), 507-517 (HSQPTLPSSTA), and 540-549 (ADSSVSSTLN). 2 stretches are compositionally biased toward polar residues: residues 630–642 (SDTT…TILP) and 669–681 (QASS…STAS). The segment covering 728–737 (GHSDSSRSRT) has biased composition (basic and acidic residues).

The protein belongs to the ATG2 family.

Its subcellular location is the preautophagosomal structure membrane. It is found in the endoplasmic reticulum membrane. The catalysed reaction is a 1,2-diacyl-sn-glycero-3-phosphocholine(in) = a 1,2-diacyl-sn-glycero-3-phosphocholine(out). The enzyme catalyses a 1,2-diacyl-sn-glycero-3-phospho-L-serine(in) = a 1,2-diacyl-sn-glycero-3-phospho-L-serine(out). It catalyses the reaction a 1,2-diacyl-sn-glycero-3-phosphoethanolamine(in) = a 1,2-diacyl-sn-glycero-3-phosphoethanolamine(out). Its function is as follows. Lipid transfer protein required for autophagosome completion and peroxisome degradation. Tethers the edge of the isolation membrane (IM) to the endoplasmic reticulum (ER) and mediates direct lipid transfer from ER to IM for IM expansion. Atg2 binds to the ER exit site (ERES), which is the membrane source for autophagosome formation, using basic residues in its N-terminal region (NR) and to the expanding edge of the IM through its C-terminal region. The latter binding is assisted by an atg18-PtdIns3P interaction. Atg2 then extracts phospholipids from the membrane source using its NR and transfers them to atg9 to the IM through its predicted beta-sheet-rich structure for membrane expansion. The protein is Autophagy-related protein 2 (atg2) of Sclerotinia sclerotiorum (strain ATCC 18683 / 1980 / Ss-1) (White mold).